The chain runs to 550 residues: O-phosphoserine--tRNA(Cys) ligase (550 aa).

The interval 1-32 (MRFNPQDWKEKSHTNFEGAWHDGPSVITPPGE) is disordered. Residues 212–214 (HMT), 257–259 (SAS), 299–300 (YY), and Asn342 each bind substrate.

Belongs to the class-II aminoacyl-tRNA synthetase family. O-phosphoseryl-tRNA(Cys) synthetase subfamily. In terms of assembly, homotetramer. Interacts with SepCysS.

It catalyses the reaction tRNA(Cys) + O-phospho-L-serine + ATP = O-phospho-L-seryl-tRNA(Cys) + AMP + diphosphate. Functionally, catalyzes the attachment of O-phosphoserine (Sep) to tRNA(Cys). The polypeptide is O-phosphoserine--tRNA(Cys) ligase (Methanoregula boonei (strain DSM 21154 / JCM 14090 / 6A8)).